We begin with the raw amino-acid sequence, 88 residues long: Small ribosomal subunit protein uS17 (88 aa).

The protein belongs to the universal ribosomal protein uS17 family. As to quaternary structure, part of the 30S ribosomal subunit.

In terms of biological role, one of the primary rRNA binding proteins, it binds specifically to the 5'-end of 16S ribosomal RNA. The polypeptide is Small ribosomal subunit protein uS17 (Prochlorococcus marinus (strain MIT 9515)).